Reading from the N-terminus, the 101-residue chain is Large ribosomal subunit protein bL21 (101 aa).

This sequence belongs to the bacterial ribosomal protein bL21 family. In terms of assembly, part of the 50S ribosomal subunit. Contacts protein L20.

Functionally, this protein binds to 23S rRNA in the presence of protein L20. The chain is Large ribosomal subunit protein bL21 from Metamycoplasma arthritidis (strain 158L3-1) (Mycoplasma arthritidis).